Here is a 322-residue protein sequence, read N- to C-terminus: Ribose-phosphate pyrophosphokinase (322 aa).

Residues 43–45 (DGE) and 102–103 (RQ) each bind ATP. Residues His137 and Asp177 each coordinate Mg(2+). The active site involves Lys201. D-ribose 5-phosphate-binding positions include Arg203, Asp227, and 231-235 (DTAGT).

This sequence belongs to the ribose-phosphate pyrophosphokinase family. Class I subfamily. In terms of assembly, homohexamer. Mg(2+) is required as a cofactor.

The protein resides in the cytoplasm. It catalyses the reaction D-ribose 5-phosphate + ATP = 5-phospho-alpha-D-ribose 1-diphosphate + AMP + H(+). Its pathway is metabolic intermediate biosynthesis; 5-phospho-alpha-D-ribose 1-diphosphate biosynthesis; 5-phospho-alpha-D-ribose 1-diphosphate from D-ribose 5-phosphate (route I): step 1/1. Functionally, involved in the biosynthesis of the central metabolite phospho-alpha-D-ribosyl-1-pyrophosphate (PRPP) via the transfer of pyrophosphoryl group from ATP to 1-hydroxyl of ribose-5-phosphate (Rib-5-P). This chain is Ribose-phosphate pyrophosphokinase, found in Xylella fastidiosa (strain Temecula1 / ATCC 700964).